Reading from the N-terminus, the 307-residue chain is sn-1-specific diacylglycerol lipase ABHD11 (307 aa).

The N-terminal 34 residues, 1 to 34, are a transit peptide targeting the mitochondrion; the sequence is MLRWARAWRVPRGVLGASSPRRLAVPVTFCSSRS. N6-succinyllysine is present on K79. The active-site Charge relay system is the S133. K196 carries the post-translational modification N6-succinyllysine. Residues D229 and H288 each act as charge relay system in the active site.

The protein belongs to the AB hydrolase superfamily. Interacts with OGDH and DLST; this interaction maintains the functional lipoylation of the 2-oxoglutarate dehydrogenase complex. Post-translationally, phosphorylated. Expressed in white adipose tissues.

Its subcellular location is the mitochondrion. The protein resides in the mitochondrion matrix. The enzyme catalyses 1-octadecanoyl-2-(5Z,8Z,11Z,14Z-eicosatetraenoyl)-sn-glycerol + H2O = 2-(5Z,8Z,11Z,14Z-eicosatetraenoyl)-glycerol + octadecanoate + H(+). It catalyses the reaction a 1,2-diacyl-sn-glycerol + H2O = a 2-acylglycerol + a fatty acid + H(+). The catalysed reaction is a 1,3-diacyl-sn-glycerol + H2O = a 1-acyl-sn-glycerol + a fatty acid + H(+). It carries out the reaction 1-octadecanoyl-2-(9Z-octadecenoyl)-sn-glycerol + H2O = 2-(9Z-octadecenoyl)-glycerol + octadecanoate + H(+). The enzyme catalyses 1-octadecanoyl-2-(4Z,7Z,10Z,13Z,16Z,19Z-docosahexaenoyl)-sn-glycerol + H2O = 2-(4Z,7Z,10Z,13Z,16Z,19Z-docosahexaenoyl)-glycerol + octadecanoate + H(+). It catalyses the reaction 1,2-didecanoylglycerol + H2O = decanoylglycerol + decanoate + H(+). Functionally, catalyzes the hydrolysis of diacylglycerol in vitro and may function as a key regulator in lipid metabolism, namely by regulating the intracellular levels of diacylglycerol. 1,2-diacyl-sn-glycerols are the preferred substrate over 1,3-diacyl-sn-glycerols. The enzyme hydrolyzes stearate in preference to palmitate from the sn-1 position of 1,2-diacyl-sn-glycerols. Maintains the functional lipoylation of the 2-oxoglutarate dehydrogenase complex (OGDHc) through its interaction with the OGDHc by preventing the formation of lipoyl adducts. In addition, is also required for the expansion and differentiation of embryonic stem cells (ESCs). The chain is sn-1-specific diacylglycerol lipase ABHD11 from Mus musculus (Mouse).